The sequence spans 612 residues: DEAD-box ATP-dependent RNA helicase 11 (612 aa).

2 disordered regions span residues 1 to 70 (MSAS…SGGG) and 83 to 104 (GAGG…WDRR). Residue S2 is modified to N-acetylserine. 2 stretches are compositionally biased toward gly residues: residues 61–70 (SGGGGASGGG) and 83–94 (GAGGGGGGGGGW). Positions 151-179 (NTFADIDLGDALNLNIRRCKYVRPTPVQR) match the Q motif motif. A Helicase ATP-binding domain is found at 182–366 (IPILLAERDL…ADFMSNYIFL (185 aa)). An ATP-binding site is contributed by 195 to 202 (AQTGSGKT). A DEAD box motif is present at residues 310–313 (DEAD). A Helicase C-terminal domain is found at 377–542 (LITQRVEFVQ…EVPEWLTRYA (166 aa)). Positions 547–583 (FGGGKKRSGGRFGGRDFRREGSYSRGGGGGGGGGGSD) are disordered. The span at 559–568 (GGRDFRREGS) shows a compositional bias: basic and acidic residues. Residues 570–583 (SRGGGGGGGGGGSD) are compositionally biased toward gly residues.

It belongs to the DEAD box helicase family. DDX3/DED1 subfamily.

It carries out the reaction ATP + H2O = ADP + phosphate + H(+). The polypeptide is DEAD-box ATP-dependent RNA helicase 11 (RH11) (Arabidopsis thaliana (Mouse-ear cress)).